The following is a 104-amino-acid chain: Flagellar hook-basal body complex protein FliE (104 aa).

This sequence belongs to the FliE family.

It is found in the bacterial flagellum basal body. The protein is Flagellar hook-basal body complex protein FliE of Salmonella typhi.